A 1030-amino-acid polypeptide reads, in one-letter code: Pro-apoptotic serine protease NMA111 (1030 aa).

The segment at 1 to 48 (MNGTTSPIAARSKRKEPPHTVDGRHPKHHRTNGEVAPAADNTPDNQDE) is disordered. The segment covering 15–24 (KEPPHTVDGR) has biased composition (basic and acidic residues). The tract at residues 89-279 (VVSIRFCQTC…LPLDRPLRAL (191 aa)) is serine protease. Residues His127, Asp158, and Ser240 each act as charge relay system in the active site. PDZ domains are found at residues 312–384 (PEWE…LRGG) and 880–960 (AVSF…LRAM).

The protein belongs to the peptidase S1C family.

The protein localises to the nucleus. Functionally, nuclear serine protease which mediates apoptosis. The polypeptide is Pro-apoptotic serine protease NMA111 (NMA111) (Chaetomium globosum (strain ATCC 6205 / CBS 148.51 / DSM 1962 / NBRC 6347 / NRRL 1970) (Soil fungus)).